The following is a 434-amino-acid chain: (3,5-dihydroxyphenyl)acetyl-CoA 1,2-dioxygenase (434 aa).

Substrate-binding positions include D184, E190, 223–226 (HPRY), 234–239 (AGINLK), G293, 322–324 (IPG), and Q413.

This sequence belongs to the enoyl-CoA hydratase/isomerase family. In terms of assembly, homohexamer; dimer of trimers.

The catalysed reaction is (3,5-dihydroxyphenyl)acetyl-CoA + O2 = 2-(3,5-dihydroxyphenyl)-2-oxoacetate + CoA + H(+). Involved in the biosynthesis of the nonproteinogenic amino acid monomer (S)-3,5-dihydroxyphenylglycine (Dpg) responsible of the production of vancomycin and teicoplanin antibiotics. Catalyzes the unusual conversion 3,5-dihydroxyphenylacetyl-CoA (DPA-CoA) to 3,5-dihydroxyphenylglyoxylate. DpgC performed a net four-electron oxidation of the benzylic carbon of DPA-CoA and the hydrolysis of the thioester bond to generate free CoA. It can also use phenylacetyl-CoA (PA-CoA) as substrate. This chain is (3,5-dihydroxyphenyl)acetyl-CoA 1,2-dioxygenase (dpgC), found in Amycolatopsis orientalis (Nocardia orientalis).